A 424-amino-acid chain; its full sequence is GTPase Obg (424 aa).

Residues 1-158 (MFVDRARIYI…LWVILELKLL (158 aa)) enclose the Obg domain. Residues 159-330 (ADVGLIGFPN…LIYYAAQKLK (172 aa)) enclose the OBG-type G domain. Residues 165–172 (GFPNVGKS), 190–194 (FTTIN), 212–215 (DIPG), 282–285 (NKMD), and 311–313 (SAA) contribute to the GTP site. Ser172 and Thr192 together coordinate Mg(2+). An OCT domain is found at 347–424 (YTAVEEEPFN…MYDLEFEYFR (78 aa)).

The protein belongs to the TRAFAC class OBG-HflX-like GTPase superfamily. OBG GTPase family. As to quaternary structure, monomer. The cofactor is Mg(2+).

The protein resides in the cytoplasm. Functionally, an essential GTPase which binds GTP, GDP and possibly (p)ppGpp with moderate affinity, with high nucleotide exchange rates and a fairly low GTP hydrolysis rate. Plays a role in control of the cell cycle, stress response, ribosome biogenesis and in those bacteria that undergo differentiation, in morphogenesis control. The protein is GTPase Obg of Acetivibrio thermocellus (strain ATCC 27405 / DSM 1237 / JCM 9322 / NBRC 103400 / NCIMB 10682 / NRRL B-4536 / VPI 7372) (Clostridium thermocellum).